We begin with the raw amino-acid sequence, 339 residues long: Anthranilate phosphoribosyltransferase (339 aa).

5-phospho-alpha-D-ribose 1-diphosphate is bound by residues Gly80, 83–84 (GD), Thr88, 90–93 (NIST), 108–116 (KHGNRSVSS), and Ser120. Gly80 provides a ligand contact to anthranilate. Ser92 is a binding site for Mg(2+). Asn111 provides a ligand contact to anthranilate. Arg166 is a binding site for anthranilate. Mg(2+) is bound by residues Asp225 and Glu226.

This sequence belongs to the anthranilate phosphoribosyltransferase family. As to quaternary structure, homodimer. Mg(2+) serves as cofactor.

It catalyses the reaction N-(5-phospho-beta-D-ribosyl)anthranilate + diphosphate = 5-phospho-alpha-D-ribose 1-diphosphate + anthranilate. It functions in the pathway amino-acid biosynthesis; L-tryptophan biosynthesis; L-tryptophan from chorismate: step 2/5. Its function is as follows. Catalyzes the transfer of the phosphoribosyl group of 5-phosphorylribose-1-pyrophosphate (PRPP) to anthranilate to yield N-(5'-phosphoribosyl)-anthranilate (PRA). The chain is Anthranilate phosphoribosyltransferase from Moorella thermoacetica (strain ATCC 39073 / JCM 9320).